The following is a 613-amino-acid chain: MSRFARLLLIVALFFTGAWAKTVKETLRITWKEGAPNGQARELIYTNGQFPSPTLVWDEDDDIEITVYNEMAKNVTVHWHGLDQKDTPWSDGTPGLSQRPIQPGNKFVYKFKASPPGNHWYHSHEKMSLVDGLYGAIHIRPKGDRTGLWSQISQDKDDIKAMENAAHDPEYLVVSDWSQYTSEEYWKISTDSGLLVFCLDSILVNGKGEVYCPGQKFLQAELAPGLVEDAFPPGTEVSDKGCFPADLDQVQGGPWNITKRPDLIPPRVQEGCVASRHENATIVVDPSRNNGWVSMHIVAAATIAQITFSVDSHEFWLYEIDGNYVNPRKFVSAVMSAGETFSVMIKLDQKPGRYTMRIPNSGASQVLGGFAEMVYKGCESEEKTGKAYLSYGGNPTSPDVEKNSFFPWQLDTDHMSPWPPNKPRPGNADEEHLLVLGRVGAPYNYTMNTKYLYPVDFQNDDPLLFYPNATRDTENDGLVLRTKNGSWVDLILQVSTLPGDTSSFEHFMHKHGSKTWRIGFGAGVWNYTSVEEAIKERPKDFNLETPGLRDTWITAFSIGGEAYWSVFRYFVDNPGPWLFHCHIELHLMGGMGIAILDGVDAWPEHIPEEYQLC.

The signal sequence occupies residues 1 to 20; it reads MSRFARLLLIVALFFTGAWA. Plastocyanin-like domains are found at residues 29–142 and 171–359; these read ITWK…IRPK and YLVV…MRIP. The N-linked (GlcNAc...) asparagine glycan is linked to N74. Positions 78, 80, 122, and 124 each coordinate Cu cation. Residues N256, N279, N444, N468, and N484 are each glycosylated (N-linked (GlcNAc...) asparagine). In terms of domain architecture, Plastocyanin-like 3 spans 468–598; it reads NATRDTENDG…GGMGIAILDG (131 aa). H506, H509, and H511 together coordinate Cu cation. N-linked (GlcNAc...) asparagine glycosylation is present at N526. The Cu cation site is built by H580, C581, H582, and H586.

This sequence belongs to the multicopper oxidase family. It depends on Cu cation as a cofactor.

The protein resides in the cell surface. Its pathway is pigment biosynthesis. In terms of biological role, laccase; part of the Pks1 gene cluster that mediates the biosynthesis of an anthraquinone derivative pigment that contributes to conidial pigmentation that provides protection from UV radiation, heat and cold stress. The polyketide synthase Pks1 produces 1-acetyl-2,4,6,8-tetrahydroxy-9,10-anthraquinone though condensation of acetyl-CoA with malonyl-CoA. The dehydratase EthD and the laccase Mlac1 further convert the anthraquinone derivative into the final conidial pigment. In Metarhizium guizhouense (strain ARSEF 977), this protein is Laccase 1.